Consider the following 340-residue polypeptide: Deubiquitinase SseL (340 aa).

Residue histidine 222 is part of the active site. Cysteine 284 serves as the catalytic Nucleophile.

It belongs to the peptidase C79 family.

Its subcellular location is the secreted. It localises to the host cytoplasm. Effector proteins function to alter host cell physiology and promote bacterial survival in host tissues. This protease targets the host cell ubiquitin pathway by acting as a deubiquitinase in infected host cells. This chain is Deubiquitinase SseL (sseL), found in Salmonella arizonae (strain ATCC BAA-731 / CDC346-86 / RSK2980).